Consider the following 57-residue polypeptide: Potassium channel toxin alpha-KTx 4.2 (57 aa).

The signal sequence occupies residues 1–20 (MKVLYGILIIFILCSMFYLS). The propeptide at 21-22 (QE) is removed by a carboxypeptidase. Intrachain disulfides connect cysteine 29-cysteine 50, cysteine 35-cysteine 55, and cysteine 39-cysteine 57.

Belongs to the short scorpion toxin superfamily. Potassium channel inhibitor family. Alpha-KTx 04 subfamily. In terms of tissue distribution, expressed by the venom gland.

It localises to the secreted. Blocker for small-conductance calcium-activated potassium channels KCa2.2/KCNN2 (Kd=80 nM) and KCa2.3/KCNN3 (Kd=197 nM) and ERG1/Kv11.1/KCNH2 potassium channels (53% inhibition at 5 uM). Has also been shown to inhibit Kv1.1/KCNA1 and Nav1.7/SCN9A with a moderate potency, as well as Kv11.1/KCNH2/ERG1 and Kv1.2/KCNA2 with a low potency. The protein is Potassium channel toxin alpha-KTx 4.2 of Tityus serrulatus (Brazilian scorpion).